Here is a 136-residue protein sequence, read N- to C-terminus: Large ribosomal subunit protein eL27 (136 aa).

The KOW domain maps to 5-40 (MKPGKVVLVLAGRYSGRKAVIVKNIDDGTSDRPYSH). N6-acetyllysine occurs at positions 27 and 93.

Belongs to the eukaryotic ribosomal protein eL27 family. Component of the large ribosomal subunit. Interacts with RRP1B. Component of the large ribosomal subunit. Interacts with RRP1B. Interacts with DHX33.

Its subcellular location is the cytoplasm. The protein resides in the cytosol. The protein localises to the rough endoplasmic reticulum. Functionally, component of the large ribosomal subunit. Required for proper rRNA processing and maturation of 28S and 5.8S rRNAs. This Bos taurus (Bovine) protein is Large ribosomal subunit protein eL27 (RPL27).